The chain runs to 3351 residues: Apolipophorins (3351 aa).

An N-terminal signal peptide occupies residues 1–25 (MARMKYNIALIGILASVLLTIAVNA). One can recognise a Vitellogenin domain in the interval 43 to 641 (YIPGNYYDYS…SQHGFLPRSS (599 aa)). N-linked (GlcNAc...) asparagine glycans are attached at residues Asn-67, Asn-644, Asn-1514, Asn-1744, Asn-1932, Asn-1979, and Asn-2822. A VWFD domain is found at 2786-2952 (LRGHVVDGKH…DYGVGKCTAI (167 aa)).

Interacts with Nrx-1 (via cytoplasmic domain); the interaction supports apolpp/ApoLI protein stability. In terms of processing, may be modified covalently by lipidation. Cleaved into 2 chains by furin protease. However, prevention of cleavage does not impair its function. In terms of tissue distribution, during stage 12, it is highly present throughout the yolk sac. By late stage 14, it localizes in the lateral fat body cells. Starting at stage 14, it localizes to the apodemes. Component of hemolymph clots (at protein level). Expressed in the amniosera. Expressed in rhabdomere of photoreceptor cells in retina (at protein level). As to expression, expressed in rhabdomere of photoreceptor cells in retina (at protein level). Expressed in simper cells as well as interphotoreceptor matrix (at protein level).

Its subcellular location is the secreted. The protein localises to the cell projection. It is found in the rhabdomere. Constitutes the major component of lipophorin, which mediates transport for various types of lipids in hemolymph. Acts by forming lipoprotein particles that bind lipoproteins and lipids. Also involved in the transport of hydrophobic ligands like juvenile hormones, pheromone hydrocarbons and carotenoids. Required for morphogens wingless (wg) and hedgehog (hh) function, probably by acting as vehicles for the movement of wg and hh, explaining how covalently lipidated wg and hh can spread over long distances. May also be involved in transport and/or metabolism of heme. Involved in yolk granule formation. May be a component of yolk incorporated into yolk granules via yl/yolkless-mediated endocytosis and the endolysosomal pathway. This is Apolipophorins from Drosophila melanogaster (Fruit fly).